The chain runs to 478 residues: RNA-binding protein 42 (478 aa).

Low complexity predominate over residues 1 to 20 (MASAMAGAGPAPGLPVAGGP). The segment at 1–33 (MASAMAGAGPAPGLPVAGGPVVPGPGVGIPGKS) is disordered. A2 bears the N-acetylalanine mark. Residue S133 is modified to Phosphoserine. Asymmetric dimethylarginine is present on residues R151, R156, R166, and R179. Disordered stretches follow at residues 171–209 (LSSAAGGPRPMALRPPHQALVGPPLPGPPGPPMMLPPMA) and 317–354 (SLRPRPRPPRPEPPPGLMALEVPEPLGEDKKKGKPEKL). Residues 193 to 205 (PPLPGPPGPPMML) are compositionally biased toward pro residues. The interval 234 to 478 (DLGLGLGLGL…QKEKKKLGLR (245 aa)) is necessary for interaction with HNRNPK. Residues 343-354 (GEDKKKGKPEKL) are compositionally biased toward basic and acidic residues. Positions 379 to 457 (FRIFCGDLGN…RPIKLRKSMW (79 aa)) constitute an RRM domain.

Belongs to the RRM RBM42 family. As to quaternary structure, interacts with HNRNPK.

The protein resides in the nucleus. It localises to the cytoplasm. Functionally, binds (via the RRM domain) to the 3' untranslated region (UTR) of p21 mRNA. The protein is RNA-binding protein 42 (Rbm42) of Rattus norvegicus (Rat).